We begin with the raw amino-acid sequence, 255 residues long: tRNA-cytidine(32) 2-sulfurtransferase (255 aa).

A PP-loop motif motif is present at residues Ser37 to Ser42. Positions 112, 115, and 202 each coordinate [4Fe-4S] cluster.

Belongs to the TtcA family. As to quaternary structure, homodimer. The cofactor is Mg(2+). [4Fe-4S] cluster serves as cofactor.

The protein localises to the cytoplasm. It carries out the reaction cytidine(32) in tRNA + S-sulfanyl-L-cysteinyl-[cysteine desulfurase] + AH2 + ATP = 2-thiocytidine(32) in tRNA + L-cysteinyl-[cysteine desulfurase] + A + AMP + diphosphate + H(+). It functions in the pathway tRNA modification. Catalyzes the ATP-dependent 2-thiolation of cytidine in position 32 of tRNA, to form 2-thiocytidine (s(2)C32). The sulfur atoms are provided by the cysteine/cysteine desulfurase (IscS) system. The protein is tRNA-cytidine(32) 2-sulfurtransferase of Citrifermentans bemidjiense (strain ATCC BAA-1014 / DSM 16622 / JCM 12645 / Bem) (Geobacter bemidjiensis).